A 70-amino-acid polypeptide reads, in one-letter code: ATP synthase subunit c (70 aa).

2 helical membrane-spanning segments follow: residues 4 to 24 and 45 to 65; these read IAAAIAIGLGALGAGIGNGLI and LMFIGVALVEALPIIAVVIAF.

This sequence belongs to the ATPase C chain family. As to quaternary structure, F-type ATPases have 2 components, F(1) - the catalytic core - and F(0) - the membrane proton channel. F(1) has five subunits: alpha(3), beta(3), gamma(1), delta(1), epsilon(1). F(0) has three main subunits: a(1), b(2) and c(10-14). The alpha and beta chains form an alternating ring which encloses part of the gamma chain. F(1) is attached to F(0) by a central stalk formed by the gamma and epsilon chains, while a peripheral stalk is formed by the delta and b chains.

It localises to the cell membrane. Functionally, f(1)F(0) ATP synthase produces ATP from ADP in the presence of a proton or sodium gradient. F-type ATPases consist of two structural domains, F(1) containing the extramembraneous catalytic core and F(0) containing the membrane proton channel, linked together by a central stalk and a peripheral stalk. During catalysis, ATP synthesis in the catalytic domain of F(1) is coupled via a rotary mechanism of the central stalk subunits to proton translocation. In terms of biological role, key component of the F(0) channel; it plays a direct role in translocation across the membrane. A homomeric c-ring of between 10-14 subunits forms the central stalk rotor element with the F(1) delta and epsilon subunits. The chain is ATP synthase subunit c from Bacillus licheniformis (strain ATCC 14580 / DSM 13 / JCM 2505 / CCUG 7422 / NBRC 12200 / NCIMB 9375 / NCTC 10341 / NRRL NRS-1264 / Gibson 46).